The primary structure comprises 352 residues: Galactokinase (352 aa).

A substrate-binding site is contributed by 14–17; it reads EHTD. Residues serine 46 and 96 to 102 each bind ATP; that span reads GAGLSSS. The Mg(2+) site is built by serine 102 and glutamate 134. Aspartate 146 (proton acceptor) is an active-site residue. Tyrosine 196 contacts substrate.

Belongs to the GHMP kinase family. GalK subfamily.

Its subcellular location is the cytoplasm. It carries out the reaction alpha-D-galactose + ATP = alpha-D-galactose 1-phosphate + ADP + H(+). The protein operates within carbohydrate metabolism; galactose metabolism. In terms of biological role, catalyzes the transfer of the gamma-phosphate of ATP to D-galactose to form alpha-D-galactose-1-phosphate (Gal-1-P). In Thermosipho africanus (strain TCF52B), this protein is Galactokinase.